We begin with the raw amino-acid sequence, 724 residues long: MLPNGFSFLNPNLVAAANIQQVLLNQRFGMPPVGSIAQVPLLQMPTHSVVAPHVAAPTRPSPMLVPPGMGIDESHSSPSVESDWSVHTNEKGTPYYHNRVTKQTSWIKPDVLKTPLERSTSGQPQQGQWKEFMSDDGKPYYYNTLTKKTQWVKPDGEEITKGEQKPAAKAATVDTVALAAAVQQKKAESDLDKAMKATLASMPNVPLPSEKKEEESVNDEVELKKRQSERFRELLRDKYNDGKITTNCNWDQAVKWIQNDPRFRILNKVSEKKQLFNAWKVQRGKEERDEKRLAIKKSKEDLEKFLQEHPKMKESLKYQKASDIFSKEPLWIAVNDEDRKEIFRDCIDFVARRDKEKKEEDRKRDIAAFSHVLQSMEQITYKTTWAQAQRILYENPQFAERKDLHFMDKEDALTVFEDHIKQAEKEHDEEKEQEEKRLRRQQRKVREEYRLLLESLHKRGELTSMSLWTSLFPIISTDTRFELMLFQPGSSPLDLFKFFVEDLKEQYTEDRRLIKEILTEKGCQVIATTEYREFSDWVVSHEKGGKVDHGNMKLCYNSLIEKAESKAKDEEKESLRRKRRLESEFRNLLKEHNVDKDSEWTVIKPKIEKDKAYLAMENDDERETAFNHYKNGTSGTTAGSEILEKKKKKKDKKKKNKRSDNNSESEGEIREKEKKKKKKHSKEDRMDDEERGKKSKKSRKRSPSRSESPRHSSEKRKRRESEAD.

2 consecutive WW domains span residues 78–111 and 123–156; these read PSVESDWSVHTNEKGTPYYHNRVTKQTSWIKPDV and QPQQGQWKEFMSDDGKPYYYNTLTKKTQWVKPDG. FF domains follow at residues 224-282, 295-349, 353-422, 442-502, 507-562, and 578-632; these read KKRQ…WKVQ, IKKS…CIDF, RDKE…HIKQ, QRKV…FVED, YTED…LIEK, and KRRL…YKNG. The segment at 626-724 is disordered; it reads FNHYKNGTSG…KRKRRESEAD (99 aa). The span at 630-639 shows a compositional bias: polar residues; that stretch reads KNGTSGTTAG. A compositionally biased stretch (basic residues) spans 645–657; it reads KKKKKKDKKKKNK. Basic and acidic residues predominate over residues 681 to 692; that stretch reads SKEDRMDDEERG. Positions 693-703 are enriched in basic residues; that stretch reads KKSKKSRKRSP.

The polypeptide is WW domain-containing protein ZK1098.1 (Caenorhabditis elegans).